Here is a 245-residue protein sequence, read N- to C-terminus: tRNA (guanine-N(1)-)-methyltransferase (245 aa).

Residues Gly114 and 133–138 contribute to the S-adenosyl-L-methionine site; that span reads IGDYVL.

Belongs to the RNA methyltransferase TrmD family. In terms of assembly, homodimer.

It is found in the cytoplasm. It catalyses the reaction guanosine(37) in tRNA + S-adenosyl-L-methionine = N(1)-methylguanosine(37) in tRNA + S-adenosyl-L-homocysteine + H(+). Functionally, specifically methylates guanosine-37 in various tRNAs. The sequence is that of tRNA (guanine-N(1)-)-methyltransferase from Prochlorococcus marinus (strain MIT 9312).